We begin with the raw amino-acid sequence, 216 residues long: Adenylate kinase (216 aa).

10–15 provides a ligand contact to ATP; sequence GAGKGT. The segment at 30 to 59 is NMP; that stretch reads STGDMLRAAVKAGTELGIKAKSIMDAGGLV. AMP contacts are provided by residues Thr-31, Arg-36, 57–59, 85–88, and Gln-92; these read GLV and GFPR. The interval 122-159 is LID; that stretch reads GRRVHEASGRVYHIVYNPPKIAGKDDITGEELVQRKDD. ATP contacts are provided by residues Arg-123 and 132-133; that span reads VY. AMP-binding residues include Arg-156 and Arg-167. Residue Gly-202 coordinates ATP.

The protein belongs to the adenylate kinase family. In terms of assembly, monomer.

The protein resides in the cytoplasm. It carries out the reaction AMP + ATP = 2 ADP. It participates in purine metabolism; AMP biosynthesis via salvage pathway; AMP from ADP: step 1/1. Its function is as follows. Catalyzes the reversible transfer of the terminal phosphate group between ATP and AMP. Plays an important role in cellular energy homeostasis and in adenine nucleotide metabolism. The protein is Adenylate kinase of Pseudomonas fluorescens (strain Pf0-1).